A 248-amino-acid chain; its full sequence is Ribosomal RNA small subunit methyltransferase J (248 aa).

S-adenosyl-L-methionine contacts are provided by residues R98–D99, E114–R115, S150–S151, and D168.

This sequence belongs to the methyltransferase superfamily. RsmJ family.

The protein localises to the cytoplasm. The catalysed reaction is guanosine(1516) in 16S rRNA + S-adenosyl-L-methionine = N(2)-methylguanosine(1516) in 16S rRNA + S-adenosyl-L-homocysteine + H(+). Specifically methylates the guanosine in position 1516 of 16S rRNA. The polypeptide is Ribosomal RNA small subunit methyltransferase J (Shewanella baltica (strain OS223)).